Reading from the N-terminus, the 203-residue chain is Protein GrpE (203 aa).

The span at 1–20 shows a compositional bias: basic and acidic residues; the sequence is MSSKEQNVHEEQVSKEKEGM. A disordered region spans residues 1 to 38; that stretch reads MSSKEQNVHEEQVSKEKEGMESVMNESQEQVKSEDAQA.

This sequence belongs to the GrpE family. In terms of assembly, homodimer.

The protein resides in the cytoplasm. Its function is as follows. Participates actively in the response to hyperosmotic and heat shock by preventing the aggregation of stress-denatured proteins, in association with DnaK and GrpE. It is the nucleotide exchange factor for DnaK and may function as a thermosensor. Unfolded proteins bind initially to DnaJ; upon interaction with the DnaJ-bound protein, DnaK hydrolyzes its bound ATP, resulting in the formation of a stable complex. GrpE releases ADP from DnaK; ATP binding to DnaK triggers the release of the substrate protein, thus completing the reaction cycle. Several rounds of ATP-dependent interactions between DnaJ, DnaK and GrpE are required for fully efficient folding. The chain is Protein GrpE from Proteus mirabilis (strain HI4320).